The chain runs to 145 residues: Polytheonamide B (145 aa).

Positions 1 to 96 (MADSDNTPTS…DDDLDQAAGG (96 aa)) are excised as a propeptide. At Thr-97 the chain carries 2-oxo-5,5-dimethylhexanoate. A 3-methylisoleucine modification is found at Ile-99. Residue Val-101 is modified to 3-methylvaline. Val-102 bears the 3-methyl-D-valine mark. Val-103 is subject to 3-methylvaline. D-alanine (Ala) is present on Ala-104. 3-methylvaline is present on Val-105. 2 positions are modified to 3-methyl-D-valine: Val-106 and Val-110. Position 112 is an N4-methyl-D-asparagine (Asn-112). Residue Thr-113 is modified to 3-hydroxyvaline (Thr). Residue Val-117 is modified to 3-methylvaline. Asn-118 carries the post-translational modification N4-methyl-D-asparagine. Gln-119 is subject to (3S)-3-methylglutamine. Val-120 is modified (3-hydroxy-D-valine). The residue at position 124 (Asn-124) is an N4-methyl-D-asparagine. Residue Asn-126 is modified to (3R)-N4-methyl-3-hydroxy-D-asparagine. Val-127 carries the post-translational modification 3-methylvaline. Val-128 is modified (3-hydroxy-D-valine). N4-methyl-D-asparagine occurs at positions 130 and 132. (3R)-N4-methyl-3-hydroxy-D-asparagine is present on Asn-134. The residue at position 136 (Asn-136) is an N4-methyl-D-asparagine. The residue at position 138 (Ser-138) is a D-serine (Ser). A D-asparagine modification is found at Asn-140. 3,3-dimethylmethionine is present on Met-141. Asn-142 is subject to D-asparagine. A D-threonine modification is found at Thr-144.

Post-translationally, epimerization of most, and perhaps all, L- to D-amino acids is catalyzed by PoyD, when PoyA and PoyD are coexpressed in E.coli. N-methylations are catalyzed by PoyE, when PoyA and PoyE are coexpressed in E.coli. In terms of processing, to obtain 2-oxo-5,5-dimethylhexanoate, Thr-97 is firstly dehydrated by PoyF. The second step possibly corresponds to methylation by PoyB/C, and the third step may be a cleavage by PoyH/J.

Its function is as follows. Antimicrobial peptide active against Gram-positive bacteria (MIC=4-&gt;125 ug/ml). May act by forming transmembrane ion channels, since the peptide rapidly depolarizes the bacterial cytoplasmic membrane, simultaneously decreasing the membrane potential and intracellular potassium contents. In Bacterium symbiont subsp. Theonella swinhoei (strain pTSMAC1), this protein is Polytheonamide B.